A 98-amino-acid chain; its full sequence is Protein E7 (98 aa).

The interval 1 to 40 (MRGETPTLQDYVLDLQPEATDLHCYEQLPDSSDEEDVIDS) is E7 terminal domain. Positions 22-26 (LHCYE) match the LXCXE motif; interaction with host RB1 and TMEM173/STING motif. A zinc finger lies at 58 to 94 (CCQCKSTLRLCVQSTQVDIRILQELLMGSFGIVCPNC). The Nuclear export signal motif lies at 76-84 (IRILQELLM).

It belongs to the papillomaviridae E7 protein family. In terms of assembly, homodimer. Homooligomer. Interacts with host RB1; this interaction induces dissociation of RB1-E2F1 complex thereby disrupting RB1 activity. Interacts with host EP300; this interaction represses EP300 transcriptional activity. Interacts with protein E2; this interaction inhibits E7 oncogenic activity. Interacts with host TMEM173/STING; this interaction impairs the ability of TMEM173/STING to sense cytosolic DNA and promote the production of type I interferon (IFN-alpha and IFN-beta). Post-translationally, highly phosphorylated.

The protein localises to the host cytoplasm. It is found in the host nucleus. Its function is as follows. E7 protein has both transforming and trans-activating activities. Disrupts the function of host retinoblastoma protein RB1/pRb, which is a key regulator of the cell cycle. Induces the disassembly of the E2F1 transcription factors from RB1, with subsequent transcriptional activation of E2F1-regulated S-phase genes. Inactivation of the ability of RB1 to arrest the cell cycle is critical for cellular transformation, uncontrolled cellular growth and proliferation induced by viral infection. Stimulation of progression from G1 to S phase allows the virus to efficiently use the cellular DNA replicating machinery to achieve viral genome replication. Interferes with histone deacetylation mediated by HDAC1 and HDAC2, leading to activation of transcription. Plays a role in viral genome replication by driving entry of quiescent cells into the cell cycle. Stimulation of progression from G1 to S phase allows the virus to efficiently use the cellular DNA replicating machinery to achieve viral genome replication. E7 protein has both transforming and trans-activating activities. Induces the disassembly of the E2F1 transcription factor from RB1, with subsequent transcriptional activation of E2F1-regulated S-phase genes. Interferes with host histone deacetylation mediated by HDAC1 and HDAC2, leading to transcription activation. Also plays a role in the inhibition of both antiviral and antiproliferative functions of host interferon alpha. Interaction with host TMEM173/STING impairs the ability of TMEM173/STING to sense cytosolic DNA and promote the production of type I interferon (IFN-alpha and IFN-beta). The protein is Protein E7 of Homo sapiens (Human).